We begin with the raw amino-acid sequence, 408 residues long: tRNA(Ile)-lysidine synthase (408 aa).

Serine 27 to serine 32 is an ATP binding site.

This sequence belongs to the tRNA(Ile)-lysidine synthase family.

It localises to the cytoplasm. It catalyses the reaction cytidine(34) in tRNA(Ile2) + L-lysine + ATP = lysidine(34) in tRNA(Ile2) + AMP + diphosphate + H(+). Ligates lysine onto the cytidine present at position 34 of the AUA codon-specific tRNA(Ile) that contains the anticodon CAU, in an ATP-dependent manner. Cytidine is converted to lysidine, thus changing the amino acid specificity of the tRNA from methionine to isoleucine. This chain is tRNA(Ile)-lysidine synthase, found in Caulobacter vibrioides (strain ATCC 19089 / CIP 103742 / CB 15) (Caulobacter crescentus).